A 24-amino-acid polypeptide reads, in one-letter code: Large ribosomal subunit protein uL30 (24 aa).

Belongs to the universal ribosomal protein uL30 family. Part of the 50S ribosomal subunit.

The protein is Large ribosomal subunit protein uL30 (rpmD) of Ectopseudomonas mendocina (Pseudomonas mendocina).